A 106-amino-acid polypeptide reads, in one-letter code: Protein translation factor SUI1 homolog (106 aa).

Belongs to the SUI1 family.

This chain is Protein translation factor SUI1 homolog, found in Methanopyrus kandleri (strain AV19 / DSM 6324 / JCM 9639 / NBRC 100938).